A 427-amino-acid chain; its full sequence is MTTSLSLFQRAQHRIPGGVNSPVRAFKGVGGTPIFIEKAQGAYLYDTEGNQYIDYVGSWGPMILGHNHPTILDAVISTAQNGLSFGAPTALEIELAELVCSLVPSIDMVRMVSSGTEATMSAIRLARGYTKRDKIIKFEGCYHGHADSLLVKAGSGALTLGQPSSPGVPADFAKHTLTCTYNDLDSVKHAFEQYPNEIACLIVEPVAGNMNCIPPQEGFLQGLRALCDQYGAVFIIDEVMTGFRVALGGAQTYYGVTPDLTCLGKVIGGGMPVGAFGGKKAIMQHIAPLGPVYQAGTLSGNPIAMAAGLACLTELKKAGNAQRLAQQTEKLALGLKALADKHHVPFVVNYVGGMFGIFFTEQKTVSSYQAVMACDTEKFNRFFHAMLAQGIYLAPSAFEAGFMSLAHSDQDIERTLQAADQVFSQLA.

K265 is modified (N6-(pyridoxal phosphate)lysine).

Belongs to the class-III pyridoxal-phosphate-dependent aminotransferase family. HemL subfamily. As to quaternary structure, homodimer. Pyridoxal 5'-phosphate is required as a cofactor.

It localises to the cytoplasm. The catalysed reaction is (S)-4-amino-5-oxopentanoate = 5-aminolevulinate. Its pathway is porphyrin-containing compound metabolism; protoporphyrin-IX biosynthesis; 5-aminolevulinate from L-glutamyl-tRNA(Glu): step 2/2. This is Glutamate-1-semialdehyde 2,1-aminomutase from Pasteurella multocida (strain Pm70).